The chain runs to 442 residues: Histidine--tRNA ligase (442 aa).

Belongs to the class-II aminoacyl-tRNA synthetase family. Homodimer.

The protein resides in the cytoplasm. It catalyses the reaction tRNA(His) + L-histidine + ATP = L-histidyl-tRNA(His) + AMP + diphosphate + H(+). In Helicobacter pylori (strain HPAG1), this protein is Histidine--tRNA ligase.